The primary structure comprises 68 residues: TxMMSK-03 (68 aa).

The signal sequence occupies residues 1-19 (MSKLGALLIICLLLFPLTA). The propeptide occupies 20–50 (VPMDGDQPADRPAERMQDDISFEQHPMFDAT). Cystine bridges form between Cys-53–Cys-67, Cys-54–Cys-63, and Cys-59–Cys-66. Pro-65 carries the post-translational modification 4-hydroxyproline; partial.

In terms of processing, contains 3 disulfide bonds. In terms of tissue distribution, expressed by the venom duct. Both hydroxylated and non-hydroxylated forms are mostly and only present in part 2 (proximal of the venom bulb) of the venom duct, respectively.

Its subcellular location is the secreted. The protein is TxMMSK-03 of Conus textile (Cloth-of-gold cone).